Reading from the N-terminus, the 249-residue chain is ATP synthase subunit a 1 (249 aa).

The next 6 membrane-spanning stretches (helical) occupy residues 26-46 (FTNV…FLYL), 84-104 (FFPF…LGLF), 114-134 (IIVT…YGFF), 143-163 (LFVP…IEII), 193-213 (FVVS…LPLI), and 216-236 (VAIT…FTVL).

This sequence belongs to the ATPase A chain family. In terms of assembly, F-type ATPases have 2 components, CF(1) - the catalytic core - and CF(0) - the membrane proton channel. CF(1) has five subunits: alpha(3), beta(3), gamma(1), delta(1), epsilon(1). CF(0) has three main subunits: a(1), b(2) and c(9-12). The alpha and beta chains form an alternating ring which encloses part of the gamma chain. CF(1) is attached to CF(0) by a central stalk formed by the gamma and epsilon chains, while a peripheral stalk is formed by the delta and b chains.

The protein resides in the cell inner membrane. Its function is as follows. Key component of the proton channel; it plays a direct role in the translocation of protons across the membrane. The sequence is that of ATP synthase subunit a 1 from Brucella anthropi (strain ATCC 49188 / DSM 6882 / CCUG 24695 / JCM 21032 / LMG 3331 / NBRC 15819 / NCTC 12168 / Alc 37) (Ochrobactrum anthropi).